Consider the following 1163-residue polypeptide: E3 ubiquitin-protein ligase TRIM33 (1163 aa).

The disordered stretch occupies residues 1 to 119 (MEVEASGTED…ASTSSSSSTP (119 aa)). Residues 27 to 38 (TETKEAADEAKS) are compositionally biased toward basic and acidic residues. Residues 45–54 (TPTTSSDSSS) are compositionally biased toward low complexity. Residues 72–87 (DPPPPPPPPPPPPPST) show a composition bias toward pro residues. The span at 88–99 (PADSTAAAASPA) shows a compositional bias: low complexity. The segment at 129–188 (CAVCKQSLQNRDCEPKLLPCLHSFCLKCIPQPDRKITMPVQGPHGQDTRIVNVMRCTVCH) adopts an RING-type zinc-finger fold. The segment at 215–268 (NSTQVCTSCEDNASAIGFCVECGEWLCKTCIEAHQRVKFTKDHKIRKKEEVSPE) adopts a B box-type 1; atypical zinc-finger fold. Residues Cys-220, Cys-223, Cys-244, His-257, Cys-280, His-283, Cys-303, and His-308 each contribute to the Zn(2+) site. The B box-type 2 zinc finger occupies 275–316 (QRPVFCPVHKQEALKLFCETCDTLTCRDCQLLEHKEHRYQFL). Residues 345–369 (ASEVQKRLKEVAETHKKVEHEIKIA) are a coiled coil. Over residues 524-533 (MQQAAIAQKH) the composition is skewed to low complexity. Disordered regions lie at residues 524 to 555 (MQQA…QQQQ), 575 to 599 (QIQQ…QMIQ), 656 to 706 (LQRQ…VITP), 753 to 848 (TVGP…PLPI), and 867 to 918 (NVKS…KEDD). The segment covering 534 to 548 (QQQHQHHQQQQHQHQ) has biased composition (basic residues). Polar residues predominate over residues 580 to 590 (MRIASQMSQHP). Low complexity-rich tracts occupy residues 678-691 (SAAN…ASMA) and 753-797 (TVGP…SGTT). Positions 821–830 (KTERTKDGRR) are enriched in basic and acidic residues. The segment covering 870–889 (SEPQSDNLSSCTNPNSRATL) has biased composition (polar residues). The PHD-type zinc-finger motif lies at 921–968 (EDWCAVCQNGGELLCCDHCPKVFHITCHIPTLKSSPSGDWMCTFCRNL). One can recognise a Bromo domain in the interval 991-1114 (AMSPEEQRRC…LYFEERLLEI (124 aa)). Residues 1128-1147 (TQIEAEKEDSDDSDDDIIQP) form a disordered region. Residues 1133-1144 (EKEDSDDSDDDI) are compositionally biased toward acidic residues.

The protein localises to the nucleus. It catalyses the reaction S-ubiquitinyl-[E2 ubiquitin-conjugating enzyme]-L-cysteine + [acceptor protein]-L-lysine = [E2 ubiquitin-conjugating enzyme]-L-cysteine + N(6)-ubiquitinyl-[acceptor protein]-L-lysine.. Its pathway is protein modification; protein ubiquitination. In terms of biological role, may act as an E3 ubiquitin-protein ligase and a transcriptional repressor. Involved in the regulation of embryonic and adult hematopoiesis. Required for normal development and survival of both committed erythroid progenitor cells and posterior mesenchymal cells. The polypeptide is E3 ubiquitin-protein ligase TRIM33 (trim33) (Danio rerio (Zebrafish)).